A 328-amino-acid polypeptide reads, in one-letter code: UPF0421 protein SAR1980 (328 aa).

Transmembrane regions (helical) follow at residues 19–39 (IAIF…IYAI), 61–81 (LPAT…FGDQ), 108–128 (VAVL…IFNF), and 132–152 (TLTA…VFPP).

This sequence belongs to the UPF0421 family.

It localises to the cell membrane. The polypeptide is UPF0421 protein SAR1980 (Staphylococcus aureus (strain MRSA252)).